The following is a 238-amino-acid chain: RNA-free ribonuclease P (238 aa).

This sequence belongs to the HARP family.

The enzyme catalyses Endonucleolytic cleavage of RNA, removing 5'-extranucleotides from tRNA precursor.. Functionally, RNA-free RNase P that catalyzes the removal of the 5'-leader sequence from pre-tRNA to produce the mature 5'-terminus. This is RNA-free ribonuclease P from Hyperthermus butylicus (strain DSM 5456 / JCM 9403 / PLM1-5).